The sequence spans 790 residues: Ribonucleoside-diphosphate reductase large subunit (790 aa).

Substrate-binding positions include Thr-208, 223-224 (SC), Gly-254, 436-440 (NLCTE), and 621-625 (PTVSS). A disulfide bridge connects residues Cys-224 and Cys-453. Asn-436 acts as the Proton acceptor in catalysis. Cys-438 functions as the Cysteine radical intermediate in the catalytic mechanism. Catalysis depends on Glu-440, which acts as the Proton acceptor.

It belongs to the ribonucleoside diphosphate reductase large chain family. Heterotetramer composed of a homodimer of the large subunit (R1) and a homodimer of the small subunit (R2). Larger multisubunit protein complex are also active, composed of (R1)n(R2)n.

The enzyme catalyses a 2'-deoxyribonucleoside 5'-diphosphate + [thioredoxin]-disulfide + H2O = a ribonucleoside 5'-diphosphate + [thioredoxin]-dithiol. Its function is as follows. Ribonucleoside-diphosphate reductase holoenzyme provides the precursors necessary for viral DNA synthesis. Allows virus growth in non-dividing cells, as well as reactivation from latency in infected hosts. Catalyzes the biosynthesis of deoxyribonucleotides from the corresponding ribonucleotides. The polypeptide is Ribonucleoside-diphosphate reductase large subunit (Equus caballus (Horse)).